A 632-amino-acid polypeptide reads, in one-letter code: tRNA uridine 5-carboxymethylaminomethyl modification enzyme MnmG (632 aa).

Residues 15 to 20, Ile-127, and Ser-182 each bind FAD; that span reads GAGHAG. 276–290 contributes to the NAD(+) binding site; sequence GPRYCPSIEDKIVRF. Gln-373 is an FAD binding site.

The protein belongs to the MnmG family. In terms of assembly, homodimer. Heterotetramer of two MnmE and two MnmG subunits. The cofactor is FAD.

The protein resides in the cytoplasm. Functionally, NAD-binding protein involved in the addition of a carboxymethylaminomethyl (cmnm) group at the wobble position (U34) of certain tRNAs, forming tRNA-cmnm(5)s(2)U34. The polypeptide is tRNA uridine 5-carboxymethylaminomethyl modification enzyme MnmG (Streptococcus pyogenes serotype M12 (strain MGAS2096)).